Here is a 60-residue protein sequence, read N- to C-terminus: Large ribosomal subunit protein bL32 (60 aa).

Residues 1 to 23 (MAVPRNRHSNARKNIRRSHHAKK) are disordered.

This sequence belongs to the bacterial ribosomal protein bL32 family.

The chain is Large ribosomal subunit protein bL32 from Chlamydia caviae (strain ATCC VR-813 / DSM 19441 / 03DC25 / GPIC) (Chlamydophila caviae).